Reading from the N-terminus, the 192-residue chain is Putative molybdenum cofactor guanylyltransferase (192 aa).

GTP contacts are provided by residues 8–10 (LAG), Lys-21, Asp-67, and Asp-101. Asp-101 provides a ligand contact to Mg(2+).

It belongs to the MobA family. Monomer. Mg(2+) is required as a cofactor.

It is found in the cytoplasm. The enzyme catalyses Mo-molybdopterin + GTP + H(+) = Mo-molybdopterin guanine dinucleotide + diphosphate. In terms of biological role, transfers a GMP moiety from GTP to Mo-molybdopterin (Mo-MPT) cofactor (Moco or molybdenum cofactor) to form Mo-molybdopterin guanine dinucleotide (Mo-MGD) cofactor. In Neisseria meningitidis serogroup B (strain ATCC BAA-335 / MC58), this protein is Putative molybdenum cofactor guanylyltransferase.